The sequence spans 561 residues: Arginine--tRNA ligase (561 aa).

Positions 129–139 (ANPTGPLHIGH) match the 'HIGH' region motif.

This sequence belongs to the class-I aminoacyl-tRNA synthetase family. Monomer.

The protein resides in the cytoplasm. The enzyme catalyses tRNA(Arg) + L-arginine + ATP = L-arginyl-tRNA(Arg) + AMP + diphosphate. The chain is Arginine--tRNA ligase from Geotalea daltonii (strain DSM 22248 / JCM 15807 / FRC-32) (Geobacter daltonii).